Consider the following 354-residue polypeptide: Bergaptol O-methyltransferase (354 aa).

His121 provides a ligand contact to bergaptol. Residues Ser174, Gly198, Asp221, and Lys255 each coordinate S-adenosyl-L-homocysteine. A bergaptol-binding site is contributed by His259. Catalysis depends on His259, which acts as the Proton acceptor.

The protein belongs to the class I-like SAM-binding methyltransferase superfamily. Cation-independent O-methyltransferase family. COMT subfamily.

The enzyme catalyses a 5-hydroxyfurocoumarin + S-adenosyl-L-methionine = a 5-methoxyfurocoumarin + S-adenosyl-L-homocysteine + H(+). It catalyses the reaction bergaptol + S-adenosyl-L-methionine = bergapten + S-adenosyl-L-homocysteine. Inhibited by Cu(2+), Ni(2+) and Co(2+). This Ammi majus (Bishop's weed) protein is Bergaptol O-methyltransferase.